The sequence spans 300 residues: Cholesterol 25-hydroxylase-like protein (300 aa).

Residue Asn-9 is glycosylated (N-linked (GlcNAc...) asparagine). A run of 3 helical transmembrane segments spans residues 43–63, 95–115, and 130–152; these read LFPP…FTFI, LQGW…LIWV, and MVSQ…HYFN. Positions 135-266 constitute a Fatty acid hydroxylase domain; sequence AIFFLAFDFT…WFNYLDRLMG (132 aa). The Histidine box-1 motif lies at 148–152; that stretch reads FHYFN. A Histidine box-2 motif is present at residues 163–167; that stretch reads HSVHH. The helical transmembrane segment at 180–200 threads the bilayer; the sequence is LHPFELFFVATFITTVPWIFP. A Histidine box-3 motif is present at residues 242–248; the sequence is AHDMHHL.

The protein belongs to the sterol desaturase family. Fe cation is required as a cofactor.

It localises to the membrane. In terms of biological role, probable sterol desaturase. The sequence is that of Cholesterol 25-hydroxylase-like protein from Caenorhabditis briggsae.